The following is a 329-amino-acid chain: MALSMEFGFSIGSCFKAPNPPVLISASPNKINFTLRRRKKRFLLRVSAVSYKEFAESALEETRKRIVLEPSHLQEKYSSMTGLDGKTELQMLAFKSSKIRLLRSMAIENETMQVFDFAGFMEPEYDTPIFCANFFTSTNVNIVVLDLNPLHQLTDQTDYQDKYYNKIMSIYHKYAETFPWGGKLTGESIKFFSPLVMWTRFSSSKEKHKALFSAFLEYYQAWLEMTIQVREEMEPSHVRANCEAQHKYLTWRAQKDPGHGLLKRLVGEAKAKELLRDFLFNGVDELGTKTFIDYFPEYQTEDGTVSDKRSIIGKSYETRPWDLTGQFIG.

The transit peptide at 1–45 directs the protein to the chloroplast; that stretch reads MALSMEFGFSIGSCFKAPNPPVLISASPNKINFTLRRRKKRFLLR.

This sequence belongs to the HY2 family.

The protein resides in the plastid. Its subcellular location is the chloroplast. The catalysed reaction is (3Z)-phytochromobilin + 2 oxidized [2Fe-2S]-[ferredoxin] = biliverdin IXalpha + 2 reduced [2Fe-2S]-[ferredoxin] + 2 H(+). Functionally, catalyzes the two-electron reduction of biliverdin IX-alpha to the tetrapyrrole chromophore phytochromobilin (PPhiB). This Arabidopsis thaliana (Mouse-ear cress) protein is Phytochromobilin:ferredoxin oxidoreductase, chloroplastic.